We begin with the raw amino-acid sequence, 218 residues long: Small ribosomal subunit protein uS7 (218 aa).

This sequence belongs to the universal ribosomal protein uS7 family. Part of the 30S ribosomal subunit.

Its function is as follows. One of the primary rRNA binding proteins, it binds directly to 16S rRNA where it nucleates assembly of the head domain of the 30S subunit. Is located at the subunit interface close to the decoding center. This chain is Small ribosomal subunit protein uS7 (rps7), found in Pyrococcus horikoshii (strain ATCC 700860 / DSM 12428 / JCM 9974 / NBRC 100139 / OT-3).